We begin with the raw amino-acid sequence, 243 residues long: 1-(5-phosphoribosyl)-5-[(5-phosphoribosylamino)methylideneamino] imidazole-4-carboxamide isomerase (243 aa).

Asp-8 (proton acceptor) is an active-site residue. Catalysis depends on Asp-129, which acts as the Proton donor.

It belongs to the HisA/HisF family.

Its subcellular location is the cytoplasm. The enzyme catalyses 1-(5-phospho-beta-D-ribosyl)-5-[(5-phospho-beta-D-ribosylamino)methylideneamino]imidazole-4-carboxamide = 5-[(5-phospho-1-deoxy-D-ribulos-1-ylimino)methylamino]-1-(5-phospho-beta-D-ribosyl)imidazole-4-carboxamide. Its pathway is amino-acid biosynthesis; L-histidine biosynthesis; L-histidine from 5-phospho-alpha-D-ribose 1-diphosphate: step 4/9. This Syntrophotalea carbinolica (strain DSM 2380 / NBRC 103641 / GraBd1) (Pelobacter carbinolicus) protein is 1-(5-phosphoribosyl)-5-[(5-phosphoribosylamino)methylideneamino] imidazole-4-carboxamide isomerase.